Consider the following 239-residue polypeptide: tRNA (guanine-N(1)-)-methyltransferase (239 aa).

Residues G108 and 127–132 each bind S-adenosyl-L-methionine; that span reads LGDFVL.

This sequence belongs to the RNA methyltransferase TrmD family. Homodimer.

It is found in the cytoplasm. It catalyses the reaction guanosine(37) in tRNA + S-adenosyl-L-methionine = N(1)-methylguanosine(37) in tRNA + S-adenosyl-L-homocysteine + H(+). In terms of biological role, specifically methylates guanosine-37 in various tRNAs. The protein is tRNA (guanine-N(1)-)-methyltransferase of Streptococcus thermophilus (strain ATCC BAA-250 / LMG 18311).